Consider the following 72-residue polypeptide: uncharacterized protein (72 aa).

This is an uncharacterized protein from Vertebrata (FPV).